Reading from the N-terminus, the 314-residue chain is tRNA dimethylallyltransferase (314 aa).

Residue 13–20 (GPTAVGKT) coordinates ATP. 15-20 (TAVGKT) serves as a coordination point for substrate. An interaction with substrate tRNA region spans residues 38–41 (DSMQ).

Belongs to the IPP transferase family. Monomer. It depends on Mg(2+) as a cofactor.

The enzyme catalyses adenosine(37) in tRNA + dimethylallyl diphosphate = N(6)-dimethylallyladenosine(37) in tRNA + diphosphate. Functionally, catalyzes the transfer of a dimethylallyl group onto the adenine at position 37 in tRNAs that read codons beginning with uridine, leading to the formation of N6-(dimethylallyl)adenosine (i(6)A). This Bacillus velezensis (strain DSM 23117 / BGSC 10A6 / LMG 26770 / FZB42) (Bacillus amyloliquefaciens subsp. plantarum) protein is tRNA dimethylallyltransferase.